The primary structure comprises 877 residues: Mediator of RNA polymerase II transcription subunit 16 (877 aa).

9 WD repeats span residues 21–71 (WEKW…EHPW), 72–119 (DLHS…NSWE), 120–165 (SSVG…VKFS), 166–203 (PSLT…LTST), 204–257 (ESLC…RIDT), 258–334 (EILP…DKQP), 335–415 (TILK…RPVD), 416–460 (EPAM…LSPS), and 461–495 (MGHP…LLHV). The tract at residues 848 to 877 (PAFVQLGPQSTHHSPRTPRSLDHLHPEDRP) is disordered. Basic and acidic residues predominate over residues 866–877 (RSLDHLHPEDRP).

This sequence belongs to the Mediator complex subunit 16 family. As to quaternary structure, component of the Mediator complex, which is composed of MED1, MED4, MED6, MED7, MED8, MED9, MED10, MED11, MED12, MED13, MED13L, MED14, MED15, MED16, MED17, MED18, MED19, MED20, MED21, MED22, MED23, MED24, MED25, MED26, MED27, MED29, MED30, MED31, CCNC, CDK8 and CDC2L6/CDK11. The MED12, MED13, CCNC and CDK8 subunits form a distinct module termed the CDK8 module. Mediator containing the CDK8 module is less active than Mediator lacking this module in supporting transcriptional activation. Individual preparations of the Mediator complex lacking one or more distinct subunits have been variously termed ARC, CRSP, DRIP, PC2, SMCC and TRAP.

The protein localises to the nucleus. Component of the Mediator complex, a coactivator involved in the regulated transcription of nearly all RNA polymerase II-dependent genes. Mediator functions as a bridge to convey information from gene-specific regulatory proteins to the basal RNA polymerase II transcription machinery. Mediator is recruited to promoters by direct interactions with regulatory proteins and serves as a scaffold for the assembly of a functional preinitiation complex with RNA polymerase II and the general transcription factors. This is Mediator of RNA polymerase II transcription subunit 16 (MED16) from Homo sapiens (Human).